We begin with the raw amino-acid sequence, 461 residues long: B3 domain-containing protein REM9 (461 aa).

Residues 11–103 (NQHFFQPLLP…VFHVTALGPS (93 aa)) constitute a DNA-binding region (TF-B3 1). The tract at residues 110–146 (PQSSRHEEGEESGENEISEKEGEENVQKESDKSSSDL) is disordered. A compositionally biased stretch (basic and acidic residues) spans 126–143 (ISEKEGEENVQKESDKSS). DNA-binding regions (TF-B3) lie at residues 148–244 (CFSQ…CSRT) and 230–332 (LQKA…EQPS). Positions 333 to 415 (FKAEDGRHKR…SGIEGNLQHT (83 aa)) are disordered. Residues 384–394 (PKVEIREKIAE) are compositionally biased toward basic and acidic residues. A compositionally biased stretch (polar residues) spans 400-415 (RASNKSSGIEGNLQHT).

Its subcellular location is the nucleus. The polypeptide is B3 domain-containing protein REM9 (REM9) (Arabidopsis thaliana (Mouse-ear cress)).